The following is a 142-amino-acid chain: uncharacterized protein (142 aa).

The 141-residue stretch at 2–142 (IHMKQLTSKE…IESYLFRKPV (141 aa)) folds into the N-acetyltransferase domain.

Belongs to the acetyltransferase family.

This is an uncharacterized protein from Bacillus subtilis (strain 168).